A 545-amino-acid chain; its full sequence is Membrane protein insertase YidC (545 aa).

Residues 6–26 traverse the membrane as a helical segment; that stretch reads LILFSALVLVLFLMWDAWQTD. Positions 34 to 59 are disordered; it reads PPPPQPTASSGESSPVLPEAVPDAPP. Helical transmembrane passes span 357-377, 428-448, and 505-525; these read LVGN…LVFF, GGCL…WMLL, and PVMF…YWVV.

It belongs to the OXA1/ALB3/YidC family. Type 1 subfamily. In terms of assembly, interacts with the Sec translocase complex via SecD. Specifically interacts with transmembrane segments of nascent integral membrane proteins during membrane integration.

The protein localises to the cell inner membrane. Required for the insertion and/or proper folding and/or complex formation of integral membrane proteins into the membrane. Involved in integration of membrane proteins that insert both dependently and independently of the Sec translocase complex, as well as at least some lipoproteins. Aids folding of multispanning membrane proteins. The sequence is that of Membrane protein insertase YidC from Nitrosococcus oceani (strain ATCC 19707 / BCRC 17464 / JCM 30415 / NCIMB 11848 / C-107).